Here is a 491-residue protein sequence, read N- to C-terminus: Ketol-acid reductoisomerase (NADP(+)) (491 aa).

Positions 15–208 (AQLGKCRFMG…GGHRAGVLES (194 aa)) constitute a KARI N-terminal Rossmann domain. Residues 45–48 (CGAQ), Arg68, Arg76, Ser78, and 108–110 (DKQ) each bind NADP(+). The active site involves His132. Gly158 lines the NADP(+) pocket. KARI C-terminal knotted domains lie at 209-344 (SFVA…TAPQ) and 345-484 (YEGK…MTDM). Mg(2+) is bound by residues Asp217, Glu221, Glu389, and Glu393. Ser414 is a binding site for substrate.

It belongs to the ketol-acid reductoisomerase family. Mg(2+) serves as cofactor.

The catalysed reaction is (2R)-2,3-dihydroxy-3-methylbutanoate + NADP(+) = (2S)-2-acetolactate + NADPH + H(+). The enzyme catalyses (2R,3R)-2,3-dihydroxy-3-methylpentanoate + NADP(+) = (S)-2-ethyl-2-hydroxy-3-oxobutanoate + NADPH + H(+). Its pathway is amino-acid biosynthesis; L-isoleucine biosynthesis; L-isoleucine from 2-oxobutanoate: step 2/4. It participates in amino-acid biosynthesis; L-valine biosynthesis; L-valine from pyruvate: step 2/4. Involved in the biosynthesis of branched-chain amino acids (BCAA). Catalyzes an alkyl-migration followed by a ketol-acid reduction of (S)-2-acetolactate (S2AL) to yield (R)-2,3-dihydroxy-isovalerate. In the isomerase reaction, S2AL is rearranged via a Mg-dependent methyl migration to produce 3-hydroxy-3-methyl-2-ketobutyrate (HMKB). In the reductase reaction, this 2-ketoacid undergoes a metal-dependent reduction by NADPH to yield (R)-2,3-dihydroxy-isovalerate. This chain is Ketol-acid reductoisomerase (NADP(+)), found in Escherichia coli O157:H7.